The primary structure comprises 218 residues: MIVPKEKIEEAVKQALSKENNPKRGFTQSVELIIAFKDVDMKRGDIKLREAIVLPKPPSKPRNVLVVPSLEQMESAKRAEPNVILSKEELQKLQGAKRAVKKLASKNQWFLIAQDSMSLAGRILGPSLGPRGKFPTPLPSSSDVSEYILRYKRSTLVKTKDQPQTQTFVGTEDQPSGDLAENVFAVLNSIEGKIKGPAYIKAIYVKTSMGKPVQINLK.

The protein belongs to the universal ribosomal protein uL1 family. Part of the 50S ribosomal subunit.

Its function is as follows. Binds directly to 23S rRNA. Probably involved in E site tRNA release. Protein L1 is also a translational repressor protein, it controls the translation of its operon by binding to its mRNA. In Metallosphaera sedula (strain ATCC 51363 / DSM 5348 / JCM 9185 / NBRC 15509 / TH2), this protein is Large ribosomal subunit protein uL1.